Consider the following 340-residue polypeptide: MNWYPWLNAPYRQLVGQHSTGRGHHALLLHSLPGNGEDALIYALSRWLMCQQRQGEKSCGECHSCRLMLAGNHPDWYVLTPEKGKSSIGVELVRQLIDKLYSHAQQGGAKVVWLPHAEVLTDAAANALLKTLEEPPEKTYFLLDCHQPASLLATLRSRCFYWYLACPDTAICLQWLNLQWRKRQIPVEPVAMLAALKLSEGAPLAAERLLQPERWSIRSALCSGLREALNRSDLLSLLPQLNHDDAAERLQWLSSLLLDALKWQQGAGEFAVNQDQLPLVQQLAHIAATPVLLQLAKQLAHCRHQLLSVVGVNRELLLTEQLLSWETALSTGTYSTLPSL.

The DNA polymerase holoenzyme is a complex that contains 10 different types of subunits. These subunits are organized into 3 functionally essential subassemblies: the pol III core, the beta sliding clamp processivity factor and the clamp-loading complex. The pol III core (subunits alpha,epsilon and theta) contains the polymerase and the 3'-5' exonuclease proofreading activities. The polymerase is tethered to the template via the sliding clamp processivity factor. The clamp-loading complex assembles the beta processivity factor onto the primer template and plays a central role in the organization and communication at the replication fork. This complex contains delta, delta', psi and chi, and copies of either or both of two different DnaX proteins, gamma and tau. The composition of the holoenzyme is, therefore: (alpha,epsilon,theta)[2]-(gamma/tau)[3]-delta,delta', psi,chi-beta[4].

The catalysed reaction is DNA(n) + a 2'-deoxyribonucleoside 5'-triphosphate = DNA(n+1) + diphosphate. Its function is as follows. DNA polymerase III is a complex, multichain enzyme responsible for most of the replicative synthesis in bacteria. This DNA polymerase also exhibits 3' to 5' exonuclease activity. This Yersinia pestis protein is DNA polymerase III subunit delta' (holB).